The chain runs to 253 residues: CD151 antigen (253 aa).

Over 1–18 (MGEFNEKKTTCGTVCLKY) the chain is Cytoplasmic. Residues cysteine 11 and cysteine 15 are each lipidated (S-palmitoyl cysteine). Residues 19–39 (LLFTYNCCFWLAGLAVMAVGI) traverse the membrane as a helical segment. Residues 40 to 57 (WTLALKSDYISLLASGTY) lie on the Extracellular side of the membrane. Residues 58–78 (LATAYILVVAGAVVMVTGVLG) form a helical membrane-spanning segment. At 79 to 91 (CCATFKERRNLLR) the chain is on the cytoplasmic side. The helical transmembrane segment at 92 to 112 (LYFILLLIIFLLEIIAGVLAY) threads the bilayer. Residues 113–221 (VYYQQLNTEL…LETFIQEHLR (109 aa)) are Extracellular-facing. N-linked (GlcNAc...) asparagine glycosylation occurs at asparagine 159. Residues 222–242 (VIGAVGTGIACVQVFGMIFTC) form a helical membrane-spanning segment. S-palmitoyl cysteine attachment occurs at residues cysteine 242 and cysteine 243. Residues 243 to 253 (CLYRSLKLEHY) are Cytoplasmic-facing.

Belongs to the tetraspanin (TM4SF) family. As to quaternary structure, interacts with integrins ITGA3:ITGB1, ITGA5:ITGB1, ITGA3:ITGB1 and ITGA6:ITGB4 and with CD9 and CD181. Interacts (via the second extracellular domain) with integrin ITGAV:ITGB3. Interacts with ITGA3; this interaction modulates ITGA3 glycosylation pattern. Interacts with F11R. Interacts with RAC1 and CDC42; these interactions mediate physical association of RAC1 and CDC42 with integrin adhesion receptor complexes. Post-translationally, palmitoylated. Palmitoylation by ZDHHC2 regulates CD151 expression, association with other tetraspanin family proteins and function in cell adhesion. In terms of processing, ubiquitinated by RNF128 on lysine residues present in the tetraspanin amino terminus via 'Lys-48'-linked ubiquitin leading to proteasomal degradation.

Its subcellular location is the cell membrane. Structural component of specialized membrane microdomains known as tetraspanin-enriched microdomains (TERMs), which act as platforms for receptor clustering and signaling. Plays a role in various cellular and molecular mechanism through its association with both integrin and non-integrin proteins. These interactions facilitate critical cellular functions, including cell-to-cell communication, wound healing, platelet aggregation, trafficking, cell motility, and angiogenesis. Via interaction with JAM-A/F11R and integrin ITGA3:ITGB1, promotes the recruitment of signaling molecules such as RAC1, CDC42 and RhoGTPases to facilitate the polarization of epithelial cells and the reorganization of the actin cytoskeleton, which are critical steps in cell migration process. Regulates the glycosylation pattern of ITGA3:ITGB1 thereby modulating its activity. Plays an essential role in the maintenance of central laminin-binding integrin ITGA6:ITGB4-containing adhesion complexes. Essential for the proper assembly of the glomerular and tubular basement membranes in kidney. Contributes to T-cell activation by modulating integrin signaling leading to activation of downstream targets PTK2 and MAPK1/MAPK3. The protein is CD151 antigen (CD151) of Chlorocebus aethiops (Green monkey).